Reading from the N-terminus, the 487-residue chain is N-succinylglutamate 5-semialdehyde dehydrogenase (487 aa).

221–226 (GSSDTG) provides a ligand contact to NAD(+). Catalysis depends on residues Glu244 and Cys278.

Belongs to the aldehyde dehydrogenase family. AstD subfamily.

The catalysed reaction is N-succinyl-L-glutamate 5-semialdehyde + NAD(+) + H2O = N-succinyl-L-glutamate + NADH + 2 H(+). Its pathway is amino-acid degradation; L-arginine degradation via AST pathway; L-glutamate and succinate from L-arginine: step 4/5. Its function is as follows. Catalyzes the NAD-dependent reduction of succinylglutamate semialdehyde into succinylglutamate. The polypeptide is N-succinylglutamate 5-semialdehyde dehydrogenase (Burkholderia thailandensis (strain ATCC 700388 / DSM 13276 / CCUG 48851 / CIP 106301 / E264)).